The sequence spans 378 residues: Probable serine/threonine-protein kinase PBL7 (378 aa).

A disordered region spans residues 1 to 49 (MGWIPCSGKSSGRNKTRRNGDHKLDRKSSDCSVSTSEKSRAKSSLSESK). Glycine 2 carries N-myristoyl glycine lipidation. Basic and acidic residues predominate over residues 18–29 (RNGDHKLDRKSS). Residues 32-47 (SVSTSEKSRAKSSLSE) are compositionally biased toward low complexity. Threonine 62 is subject to Phosphothreonine. A Protein kinase domain is found at 73–350 (FRKECLIGEG…ADVVTALSYL (278 aa)). ATP-binding positions include 79–87 (IGEGGFGRV) and lysine 102. Tyrosine 147 carries the post-translational modification Phosphotyrosine. Aspartate 200 functions as the Proton acceptor in the catalytic mechanism. A phosphoserine mark is found at serine 204 and serine 234. 2 positions are modified to phosphothreonine: threonine 235 and threonine 240. Phosphotyrosine is present on tyrosine 248.

Belongs to the protein kinase superfamily. Ser/Thr protein kinase family. Interacts with BSU1 and BSL1. Phosphorylated at Ser-43, Ser-46 and Ser-234. Widely expressed.

The protein localises to the cell membrane. It carries out the reaction L-seryl-[protein] + ATP = O-phospho-L-seryl-[protein] + ADP + H(+). It catalyses the reaction L-threonyl-[protein] + ATP = O-phospho-L-threonyl-[protein] + ADP + H(+). Serine/threonine-protein kinase involved in the positive regulation of brassinosteroid (BR) signaling and plant growth. Phosphorylates both BSU1 and BSL1 in vitro. This chain is Probable serine/threonine-protein kinase PBL7, found in Arabidopsis thaliana (Mouse-ear cress).